A 217-amino-acid chain; its full sequence is Frizzled-8 (217 aa).

At 1–26 (AGAAELQPELAVAEHVRYESTGPALC) the chain is on the extracellular side. The helical transmembrane segment at 27-47 (TVVFLLVYFFGMASSIWWVIL) threads the bilayer. Topologically, residues 48–69 (SLTWFLAAGMKWGNEAIAGYAQ) are cytoplasmic. A helical membrane pass occupies residues 70–90 (YFHLAAWLLPSVKSIAVLALS). The Extracellular segment spans residues 91–113 (SVDGDPVAGICYVGNQSLENLRG). The N-linked (GlcNAc...) asparagine glycan is linked to Asn105. Residues 114–134 (FVLAPLVVYLFTGSLFLLAGF) form a helical membrane-spanning segment. Residues 135–160 (VSLFRIRSVIKQGGTKTDKLEKLMIR) lie on the Cytoplasmic side of the membrane. The helical transmembrane segment at 161–181 (IGIFTVLYTVPATIVIACYIY) threads the bilayer. The Extracellular portion of the chain corresponds to 182 to 209 (EQHNREAWEQAQNCSCPGDPHRPKPDYA). Asn194 carries an N-linked (GlcNAc...) asparagine glycan. The chain crosses the membrane as a helical span at residues 210–217 (VFMLKYFM).

Belongs to the G-protein coupled receptor Fz/Smo family.

The protein resides in the membrane. The protein localises to the cell membrane. Receptor for Wnt proteins. Most of frizzled receptors are coupled to the beta-catenin canonical signaling pathway, which leads to the activation of disheveled proteins, inhibition of GSK-3 kinase, nuclear accumulation of beta-catenin and activation of Wnt target genes. A second signaling pathway involving PKC and calcium fluxes has been seen for some family members, but it is not yet clear if it represents a distinct pathway or if it can be integrated in the canonical pathway, as PKC seems to be required for Wnt-mediated inactivation of GSK-3 kinase. Both pathways seem to involve interactions with G-proteins. May be involved in transduction and intercellular transmission of polarity information during tissue morphogenesis and/or in differentiated tissues. In Gallus gallus (Chicken), this protein is Frizzled-8 (FZD8).